We begin with the raw amino-acid sequence, 179 residues long: Methylated-DNA--protein-cysteine methyltransferase, inducible (179 aa).

The Nucleophile; methyl group acceptor role is filled by Cys141.

Belongs to the MGMT family.

The enzyme catalyses a 6-O-methyl-2'-deoxyguanosine in DNA + L-cysteinyl-[protein] = S-methyl-L-cysteinyl-[protein] + a 2'-deoxyguanosine in DNA. It carries out the reaction a 4-O-methyl-thymidine in DNA + L-cysteinyl-[protein] = a thymidine in DNA + S-methyl-L-cysteinyl-[protein]. Functionally, involved in the cellular defense against the biological effects of O6-methylguanine (O6-MeG) and O4-methylthymine (O4-MeT) in DNA. Repairs the methylated nucleobase in DNA by stoichiometrically transferring the methyl group to a cysteine residue in the enzyme. This is a suicide reaction: the enzyme is irreversibly inactivated. This chain is Methylated-DNA--protein-cysteine methyltransferase, inducible (adaB), found in Bacillus subtilis (strain 168).